The following is a 253-amino-acid chain: Phosphoribosylaminoimidazole-succinocarboxamide synthase (253 aa).

It belongs to the SAICAR synthetase family.

It catalyses the reaction 5-amino-1-(5-phospho-D-ribosyl)imidazole-4-carboxylate + L-aspartate + ATP = (2S)-2-[5-amino-1-(5-phospho-beta-D-ribosyl)imidazole-4-carboxamido]succinate + ADP + phosphate + 2 H(+). It functions in the pathway purine metabolism; IMP biosynthesis via de novo pathway; 5-amino-1-(5-phospho-D-ribosyl)imidazole-4-carboxamide from 5-amino-1-(5-phospho-D-ribosyl)imidazole-4-carboxylate: step 1/2. The chain is Phosphoribosylaminoimidazole-succinocarboxamide synthase from Parvibaculum lavamentivorans (strain DS-1 / DSM 13023 / NCIMB 13966).